The primary structure comprises 858 residues: Heat shock protein 105 kDa (858 aa).

The residue at position 2 (serine 2) is an N-acetylserine. Lysine 471 carries the N6-acetyllysine modification. Disordered regions lie at residues 500–585 and 801–858; these read KVPT…PPEA and VTQP…MDLD. Acidic residues predominate over residues 504-515; sequence EEEDGSSLEADM. Residues serine 509 and serine 510 each carry the phosphoserine modification. Over residues 533-549 the composition is skewed to polar residues; sequence QQDNSEAGTQPQVQTDG. A Phosphoserine modification is found at serine 558. Threonine 562 carries the phosphothreonine modification. Composition is skewed to basic and acidic residues over residues 564-585 and 806-815; these read EESKTPDADKANEKKVDQPPEA and PKIESPKLER. Serine 810 carries the post-translational modification Phosphoserine. Threonine 816 is subject to Phosphothreonine.

It belongs to the heat shock protein 70 family. In terms of assembly, interacts with HSPA8/HSC70. Interacts with HSPA1A (via NBD) and HSPA1B (via NBD). In terms of processing, phosphorylation on Ser-509 may be important for regulation of the HSPA8/HSC70 chaperone activity. As to expression, expressed in neurons in the cerebrum and Purkinje cells in the cerebellum (at protein level). Expressed in testis and no expression or only low-level expression in liver, spleen, lung, and kidney (at protein level). Highly expressed in the brain and moderately expressed in lung, heart, thymus, spleen, liver, and small intestine.

Its subcellular location is the cytoplasm. The protein localises to the nucleus. Functionally, acts as a nucleotide-exchange factor (NEF) for chaperone proteins HSPA1A and HSPA1B, promoting the release of ADP from HSPA1A/B thereby triggering client/substrate protein release. Prevents the aggregation of denatured proteins in cells under severe stress, on which the ATP levels decrease markedly. Inhibits HSPA8/HSC70 ATPase and chaperone activities. The chain is Heat shock protein 105 kDa (Hsph1) from Mus musculus (Mouse).